The following is a 91-amino-acid chain: Apolipoprotein C-III (91 aa).

An N-terminal signal peptide occupies residues 1-20 (MQPRVLLAVTLLALLVSARA). Residue M63 is modified to Methionine sulfoxide. A lipid-binding region spans residues 68-91 (DSMKGYWTSLIGRLSGFLDSTPSS).

This sequence belongs to the apolipoprotein C3 family.

The protein localises to the secreted. Component of triglyceride-rich very low density lipoproteins (VLDL) and high density lipoproteins (HDL) in plasma. Plays a multifaceted role in triglyceride homeostasis. Intracellularly, promotes hepatic very low density lipoprotein 1 (VLDL1) assembly and secretion; extracellularly, attenuates hydrolysis and clearance of triglyceride-rich lipoproteins (TRLs). Impairs the lipolysis of TRLs by inhibiting lipoprotein lipase and the hepatic uptake of TRLs by remnant receptors. Formed of several curved helices connected via semiflexible hinges, so that it can wrap tightly around the curved micelle surface and easily adapt to the different diameters of its natural binding partners. The sequence is that of Apolipoprotein C-III (APOC3) from Cavia porcellus (Guinea pig).